Reading from the N-terminus, the 214-residue chain is 3,4-dihydroxy-2-butanone 4-phosphate synthase (214 aa).

D-ribulose 5-phosphate is bound by residues 37-38 (RE), aspartate 42, 150-154 (RRGHT), and glutamate 174. Glutamate 38 is a Mg(2+) binding site. Histidine 153 is a Mg(2+) binding site.

The protein belongs to the DHBP synthase family. As to quaternary structure, homodimer. It depends on Mg(2+) as a cofactor. The cofactor is Mn(2+).

It carries out the reaction D-ribulose 5-phosphate = (2S)-2-hydroxy-3-oxobutyl phosphate + formate + H(+). It functions in the pathway cofactor biosynthesis; riboflavin biosynthesis; 2-hydroxy-3-oxobutyl phosphate from D-ribulose 5-phosphate: step 1/1. In terms of biological role, catalyzes the conversion of D-ribulose 5-phosphate to formate and 3,4-dihydroxy-2-butanone 4-phosphate. The protein is 3,4-dihydroxy-2-butanone 4-phosphate synthase of Nitratidesulfovibrio vulgaris (strain ATCC 29579 / DSM 644 / CCUG 34227 / NCIMB 8303 / VKM B-1760 / Hildenborough) (Desulfovibrio vulgaris).